Consider the following 91-residue polypeptide: Peptide Ctry2146 (91 aa).

An N-terminal signal peptide occupies residues 1–23; sequence MKTQTLLVTFLVVLLMVATQTEA. At Leu33 the chain carries Leucine amide. A propeptide spanning residues 37 to 91 is cleaved from the precursor; it reads GLLDGLLGKRGLLFGKRGPLFGKRALTNQDFLDFAYDPSLSAADMDALEMLFEDY.

This sequence belongs to the non-disulfide-bridged peptide (NDBP) superfamily. Short antimicrobial peptide (group 4) family. In terms of tissue distribution, expressed by the venom gland.

It is found in the secreted. It localises to the target cell membrane. In terms of biological role, antimicrobial peptide. The protein is Peptide Ctry2146 of Chaerilus tryznai (Scorpion).